Reading from the N-terminus, the 176-residue chain is Zinc finger A20 and AN1 domain-containing stress-associated protein 9 (176 aa).

The A20-type zinc-finger motif lies at A16–A50. Zn(2+) is bound by residues C22, C26, C38, C41, C117, C120, C131, C133, C138, H141, H147, and C149. An AN1-type zinc finger spans residues P111–G157.

Functionally, may be involved in environmental stress response. The polypeptide is Zinc finger A20 and AN1 domain-containing stress-associated protein 9 (SAP9) (Arabidopsis thaliana (Mouse-ear cress)).